The primary structure comprises 57 residues: Granulin-2 (57 aa).

2 disulfides stabilise this stretch: cysteine 4–cysteine 16 and cysteine 10–cysteine 26.

The protein belongs to the granulin family. Post-translationally, granulins are disulfide bridged. In terms of tissue distribution, ubiquitous.

It is found in the secreted. Functionally, granulins have possible cytokine-like activity. They may play a role in inflammation, wound repair, and tissue remodeling. The sequence is that of Granulin-2 from Cyprinus carpio (Common carp).